The chain runs to 117 residues: MSKILEMLEQEQMKTDLPAFAPGDTVVVQVKVTEADKSRLQAFEGVVIAVKSRGLHSAFTVRKISNGVGVERVFQTHSPIVDSIEVKRRGDVRQAKLYYLRELSGRKARIKEKLAKK.

Belongs to the bacterial ribosomal protein bL19 family.

Functionally, this protein is located at the 30S-50S ribosomal subunit interface and may play a role in the structure and function of the aminoacyl-tRNA binding site. This Colwellia psychrerythraea (strain 34H / ATCC BAA-681) (Vibrio psychroerythus) protein is Large ribosomal subunit protein bL19.